We begin with the raw amino-acid sequence, 216 residues long: Probable nicotinate-nucleotide adenylyltransferase (216 aa).

This sequence belongs to the NadD family.

The catalysed reaction is nicotinate beta-D-ribonucleotide + ATP + H(+) = deamido-NAD(+) + diphosphate. The protein operates within cofactor biosynthesis; NAD(+) biosynthesis; deamido-NAD(+) from nicotinate D-ribonucleotide: step 1/1. Functionally, catalyzes the reversible adenylation of nicotinate mononucleotide (NaMN) to nicotinic acid adenine dinucleotide (NaAD). This chain is Probable nicotinate-nucleotide adenylyltransferase, found in Citrifermentans bemidjiense (strain ATCC BAA-1014 / DSM 16622 / JCM 12645 / Bem) (Geobacter bemidjiensis).